Reading from the N-terminus, the 235-residue chain is Claudin-16 (235 aa).

Residues 1-3 lie on the Cytoplasmic side of the membrane; it reads MKD. The chain crosses the membrane as a helical span at residues 4–24; it reads LLQYAACFLAIFSTGFLIVAT. The Extracellular portion of the chain corresponds to 25-79; the sequence is RTDCWMVNADDSLEVSTKCRGLWWECVTNAFDGIRTCDEYDSIYAEHPLKLVVTR. The chain crosses the membrane as a helical span at residues 80-100; sequence ALMITADILAGFGFITLLLGL. Over 101–115 the chain is Cytoplasmic; it reads DCVKFLPDEPHIKVR. The helical transmembrane segment at 116–136 threads the bilayer; that stretch reads LCFVAGTVLLIAGTPGIIGSV. Residues 137–169 are Extracellular-facing; it reads WYAVDVYVERSSLVLHNIFLGIQYKFGWSCWLG. A helical transmembrane segment spans residues 170–190; that stretch reads MAGSLGCFLAGALLTCCLYLF. Residues 191-235 are Cytoplasmic-facing; that stretch reads KDVGPERNYPYAMRKPYSTAGVSMAKSYKAPRTETAKMYAVDTRV. The short motif at 233 to 235 is the Interaction with TJP1 element; the sequence is TRV.

This sequence belongs to the claudin family. Can form heteropolymeric tight junction strands with other claudins. Interacts with CLDN19. Interacts (via PDZ-binding motif TRV) with TJP1 (via PDZ domain). Cannot form tight junction strands on its own.

The protein localises to the cell junction. It localises to the tight junction. The protein resides in the cell membrane. The enzyme catalyses Mg(2+)(in) = Mg(2+)(out). The catalysed reaction is Ca(2+)(in) = Ca(2+)(out). It catalyses the reaction Na(+)(in) = Na(+)(out). It carries out the reaction K(+)(in) = K(+)(out). The enzyme catalyses Rb(+)(in) = Rb(+)(out). The catalysed reaction is Cs(+)(in) = Cs(+)(out). It catalyses the reaction Li(+)(in) = Li(+)(out). Forms paracellular channels: coassembles with CLDN19 into tight junction strands with cation-selective channels through the strands, conveying epithelial permeability in a process known as paracellular tight junction permeability. Involved in the maintenance of ion gradients along the nephron. In the thick ascending limb (TAL) of Henle's loop, facilitates sodium paracellular permeability from the interstitial compartment to the lumen, contributing to the lumen-positive transepithelial potential that drives paracellular magnesium and calcium reabsorption. In Rattus norvegicus (Rat), this protein is Claudin-16.